Consider the following 156-residue polypeptide: Snaclec jerdonibitin subunit alpha (156 aa).

The N-terminal stretch at 1 to 23 (MGRFIFVSFGLLVVFLSLSGTGA) is a signal peptide. 3 disulfides stabilise this stretch: Cys25–Cys36, Cys53–Cys150, and Cys125–Cys142. Positions 32-151 (FRQYCYRVFK…CGQQHLFMCK (120 aa)) constitute a C-type lectin domain.

This sequence belongs to the snaclec family. In terms of assembly, heterodimer of subunits alpha and beta; disulfide-linked. Expressed by the venom gland.

It localises to the secreted. In terms of biological role, snaclec that dose-dependently inhibits platelet aggregation induced by ristocetin or low-dose thrombin, but not by high-dose thrombin. Binds to GPIbalpha (GP1BA). In vivo, also dose-dependently induces thrombocytopenia of mice and platelet counts remains at very low level even after 18 hours intravenous injection. The protein is Snaclec jerdonibitin subunit alpha of Protobothrops jerdonii (Jerdon's pitviper).